A 419-amino-acid polypeptide reads, in one-letter code: DNA ligase (419 aa).

An NTD region spans residues 1-120 (MLNQFPGQLS…ARQKRGAHTN (120 aa)). Residues 121 to 317 (RGMIPPMLVK…NYHSPHLAKL (197 aa)) are AD domain. The active-site N6-AMP-lysine intermediate is the K151. Residues 318-419 (KPLLDAEFIL…REPINVLEII (102 aa)) are OB domain.

It belongs to the ATP-dependent DNA ligase family.

The protein resides in the virion. The enzyme catalyses ATP + (deoxyribonucleotide)n-3'-hydroxyl + 5'-phospho-(deoxyribonucleotide)m = (deoxyribonucleotide)n+m + AMP + diphosphate.. Very low-fidelity DNA ligase that seals nicks in double-stranded DNA during DNA repair. Together with the viral repair DNA polymerase X, fills the single nucleotide gaps generated by the AP endonuclease. It is not essential for viral replication and recombination. Displays a very low adenylation activity towards DNA with 3'-dideoxy- or 3'-amino-terminated nicks compared to regular nick DNA. This chain is DNA ligase, found in Ornithodoros (relapsing fever ticks).